We begin with the raw amino-acid sequence, 445 residues long: Tubulin beta-4B chain (445 aa).

The MREI motif signature appears at M1–I4. Q11 contributes to the GTP binding site. The residue at position 55 (T55) is a Phosphothreonine. Position 58 is an N6-acetyllysine (K58). Residues E69, S138, G142, T143, and G144 each contribute to the GTP site. E69 is a binding site for Mg(2+). S172 is subject to Phosphoserine; by CDK1. Positions 204 and 226 each coordinate GTP. The disordered stretch occupies residues Q426–A445. The segment covering T429–A445 has biased composition (acidic residues). E438 bears the 5-glutamyl polyglutamate mark.

The protein belongs to the tubulin family. As to quaternary structure, dimer of alpha and beta chains. A typical microtubule is a hollow water-filled tube with an outer diameter of 25 nm and an inner diameter of 15 nM. Alpha-beta heterodimers associate head-to-tail to form protofilaments running lengthwise along the microtubule wall with the beta-tubulin subunit facing the microtubule plus end conferring a structural polarity. Microtubules usually have 13 protofilaments but different protofilament numbers can be found in some organisms and specialized cells. Component of sperm flagellar doublet microtubules. The cofactor is Mg(2+). Some glutamate residues at the C-terminus are polyglycylated, resulting in polyglycine chains on the gamma-carboxyl group. Glycylation is mainly limited to tubulin incorporated into axonemes (cilia and flagella) whereas glutamylation is prevalent in neuronal cells, centrioles, axonemes, and the mitotic spindle. Both modifications can coexist on the same protein on adjacent residues, and lowering polyglycylation levels increases polyglutamylation, and reciprocally. Cilia and flagella glycylation is required for their stability and maintenance. Flagella glycylation controls sperm motility. Post-translationally, some glutamate residues at the C-terminus are polyglutamylated, resulting in polyglutamate chains on the gamma-carboxyl group. Polyglutamylation plays a key role in microtubule severing by spastin (SPAST). SPAST preferentially recognizes and acts on microtubules decorated with short polyglutamate tails: severing activity by SPAST increases as the number of glutamates per tubulin rises from one to eight, but decreases beyond this glutamylation threshold. Glutamylation is also involved in cilia motility. In terms of processing, phosphorylated on Ser-172 by CDK1 during the cell cycle, from metaphase to telophase, but not in interphase. This phosphorylation inhibits tubulin incorporation into microtubules.

Its subcellular location is the cytoplasm. It is found in the cytoskeleton. It localises to the flagellum axoneme. Functionally, tubulin is the major constituent of microtubules, a cylinder consisting of laterally associated linear protofilaments composed of alpha- and beta-tubulin heterodimers. Microtubules grow by the addition of GTP-tubulin dimers to the microtubule end, where a stabilizing cap forms. Below the cap, tubulin dimers are in GDP-bound state, owing to GTPase activity of alpha-tubulin. The chain is Tubulin beta-4B chain (TUBB4B) from Bos taurus (Bovine).